Consider the following 58-residue polypeptide: Cyclotide trypsin inhibitor TopI1 (58 aa).

The N-terminal stretch at 1–23 (MKFIIVLLLLTALTLTSIPVIEG) is a signal peptide. Residues 24-55 (ILKRCKTYDDCKDVCKARKGKCEFGICKCMIK) constitute a cross-link (cyclopeptide (Ile-Lys)). Cystine bridges form between C28/C45, C34/C50, and C38/C52. At S56 the chain carries Serine amide.

This is a cyclic peptide. Expressed by the venom gland.

Its subcellular location is the secreted. Its function is as follows. First cyclic scorpion trypsin inhibitor (Kd~0.5 nM). Does not inhibit chymotrypsin. The sequence is that of Cyclotide trypsin inhibitor TopI1 from Tityus obscurus (Amazonian scorpion).